Consider the following 466-residue polypeptide: Ribulose bisphosphate carboxylase large chain (466 aa).

At Lys5 the chain carries N6,N6,N6-trimethyllysine. Substrate-binding residues include Asn114 and Thr164. Lys166 (proton acceptor) is an active-site residue. Lys168 lines the substrate pocket. Mg(2+)-binding residues include Lys192, Asp194, and Glu195. Position 192 is an N6-carboxylysine (Lys192). The active-site Proton acceptor is His285. The substrate site is built by Arg286, His318, and Ser370.

This sequence belongs to the RuBisCO large chain family. Type I subfamily. As to quaternary structure, heterohexadecamer of 8 large chains and 8 small chains; disulfide-linked. The disulfide link is formed within the large subunit homodimers. Mg(2+) serves as cofactor. In terms of processing, the disulfide bond which can form in the large chain dimeric partners within the hexadecamer appears to be associated with oxidative stress and protein turnover.

It is found in the plastid. The protein resides in the chloroplast. The catalysed reaction is 2 (2R)-3-phosphoglycerate + 2 H(+) = D-ribulose 1,5-bisphosphate + CO2 + H2O. It carries out the reaction D-ribulose 1,5-bisphosphate + O2 = 2-phosphoglycolate + (2R)-3-phosphoglycerate + 2 H(+). In terms of biological role, ruBisCO catalyzes two reactions: the carboxylation of D-ribulose 1,5-bisphosphate, the primary event in carbon dioxide fixation, as well as the oxidative fragmentation of the pentose substrate in the photorespiration process. Both reactions occur simultaneously and in competition at the same active site. This Berzelia lanuginosa (Buttonbush) protein is Ribulose bisphosphate carboxylase large chain.